The sequence spans 248 residues: Killer cell lectin-like receptor subfamily I member 2 (248 aa).

Over 1–79 the chain is Cytoplasmic; sequence MHKKKHIKHG…GIDPWLTTWQ (79 aa). A disordered region spans residues 19–44; it reads IGTKSPTFQEKQRPSKTDQRSTVWRE. The segment covering 28–44 has biased composition (basic and acidic residues); it reads EKQRPSKTDQRSTVWRE. Residues 80-100 traverse the membrane as a helical; Signal-anchor for type II membrane protein segment; that stretch reads MITVILATLCIILVTKVGFLI. The Extracellular segment spans residues 101-248; the sequence is PSLFSKGEKQ…KKTYICEFNI (148 aa). Intrachain disulfides connect Cys132–Cys145, Cys161–Cys244, and Cys223–Cys236. Residues 139-245 enclose the C-type lectin domain; the sequence is FGNNFYCVFR…CSAKKTYICE (107 aa). N-linked (GlcNAc...) asparagine glycosylation is found at Asn197, Asn214, and Asn220.

As to quaternary structure, heterodimer with KLRE1. In terms of tissue distribution, expressed in natural killer (NK) cells.

It is found in the cell membrane. Lectin-like receptor for natural killer (NK) cells. Heterodimer formation with KLRE1 mediates NK cell cytolytic activity. The protein is Killer cell lectin-like receptor subfamily I member 2 of Mus musculus (Mouse).